We begin with the raw amino-acid sequence, 167 residues long: uncharacterized protein (167 aa).

The protein localises to the mitochondrion. This is an uncharacterized protein from Marchantia polymorpha (Common liverwort).